We begin with the raw amino-acid sequence, 475 residues long: ATP synthase subunit beta (475 aa).

Position 160–167 (160–167) interacts with ATP; sequence GGAGVGKT.

It belongs to the ATPase alpha/beta chains family. In terms of assembly, F-type ATPases have 2 components, CF(1) - the catalytic core - and CF(0) - the membrane proton channel. CF(1) has five subunits: alpha(3), beta(3), gamma(1), delta(1), epsilon(1). CF(0) has three main subunits: a(1), b(2) and c(9-12). The alpha and beta chains form an alternating ring which encloses part of the gamma chain. CF(1) is attached to CF(0) by a central stalk formed by the gamma and epsilon chains, while a peripheral stalk is formed by the delta and b chains.

The protein resides in the cell membrane. The catalysed reaction is ATP + H2O + 4 H(+)(in) = ADP + phosphate + 5 H(+)(out). In terms of biological role, produces ATP from ADP in the presence of a proton gradient across the membrane. The catalytic sites are hosted primarily by the beta subunits. This is ATP synthase subunit beta from Mycolicibacterium vanbaalenii (strain DSM 7251 / JCM 13017 / BCRC 16820 / KCTC 9966 / NRRL B-24157 / PYR-1) (Mycobacterium vanbaalenii).